Here is a 66-residue protein sequence, read N- to C-terminus: Phylloseptin-S3 (66 aa).

An N-terminal signal peptide occupies residues 1-22 (MAFLKKSLFLVLFLGLVSLSIC). The propeptide occupies 23 to 46 (EEEKRETEEEEHDQEEDDKSEEKR). The interval 25-44 (EKRETEEEEHDQEEDDKSEE) is disordered. A compositionally biased stretch (acidic residues) spans 30–41 (EEEEHDQEEDDK). Residue phenylalanine 65 is modified to Phenylalanine amide.

Belongs to the frog skin active peptide (FSAP) family. Phylloseptin subfamily. In terms of tissue distribution, expressed by the skin glands.

It localises to the secreted. Its subcellular location is the target cell membrane. In terms of biological role, antimicrobial peptide with activity against the Gram-positive S.pyogenes (MIC=12.5 uM), but not against all other bacteria tested (both Gram-positive and Gram-negative). Does not show activity against fungi, and against Leishmania species. The sequence is that of Phylloseptin-S3 from Phyllomedusa sauvagei (Sauvage's leaf frog).